Reading from the N-terminus, the 404-residue chain is Lupus La protein homolog (404 aa).

The 93-residue stretch at 7–99 (NEKMAALEAK…RRSPSKPLPE (93 aa)) folds into the HTH La-type RNA-binding domain. Residues Ser92 and Ser94 each carry the phosphoserine modification. The 77-residue stretch at 111-187 (RSVYIKGFPT…TDLLILFKED (77 aa)) folds into the RRM domain. Position 116 is an N6-acetyllysine (Lys116). Position 120 is a phosphothreonine (Thr120). An N6-acetyllysine modification is found at Lys128. Phosphoserine is present on Ser225. The xRRM domain maps to 227 to 348 (EEKIGCLLKF…KGKGNKAAQA (122 aa)). 2 positions are modified to N6-acetyllysine: Lys328 and Lys341. Positions 329-342 (WKSKGRRFKGKGKG) are enriched in basic residues. Residues 329–404 (WKSKGRRFKG…QKTENGAGDQ (76 aa)) are disordered. Residues 343-354 (NKAAQAGSAKGK) are compositionally biased toward low complexity. Residue Lys360 is modified to N6-acetyllysine. Phosphothreonine is present on Thr362. At Ser366 the chain carries Phosphoserine. The segment covering 381-391 (RAREETDKEPP) has biased composition (basic and acidic residues).

As to quaternary structure, interacts with DDX15. May interact with RUFY1. In terms of processing, phosphorylated in the C-terminal part of the protein.

It localises to the nucleus. Binds to the 3' poly(U) terminus of nascent RNA polymerase III transcripts, protecting them from exonuclease digestion and facilitating their folding and maturation. The sequence is that of Lupus La protein homolog (SSB) from Bos taurus (Bovine).